A 74-amino-acid chain; its full sequence is Defensin J1-2 (74 aa).

An N-terminal signal peptide occupies residues 1–27 (MAGFSKVIATIFLMMMLVFATGMVAEA). 4 cysteine pairs are disulfide-bonded: Cys-30–Cys-74, Cys-41–Cys-61, Cys-47–Cys-68, and Cys-51–Cys-70.

Belongs to the DEFL family. In terms of assembly, monomer. In terms of tissue distribution, expressed in flowers and in young fruits.

It localises to the secreted. In terms of biological role, plant defense peptide with antifungal activity against F.oxysporum and B.cinerea. The protein is Defensin J1-2 of Capsicum annuum (Capsicum pepper).